The following is a 316-amino-acid chain: Ribosomal RNA small subunit methyltransferase H (316 aa).

Residues 35 to 37 (GGH), aspartate 55, phenylalanine 79, aspartate 101, and glutamine 108 each bind S-adenosyl-L-methionine.

The protein belongs to the methyltransferase superfamily. RsmH family.

It localises to the cytoplasm. It carries out the reaction cytidine(1402) in 16S rRNA + S-adenosyl-L-methionine = N(4)-methylcytidine(1402) in 16S rRNA + S-adenosyl-L-homocysteine + H(+). In terms of biological role, specifically methylates the N4 position of cytidine in position 1402 (C1402) of 16S rRNA. The sequence is that of Ribosomal RNA small subunit methyltransferase H from Aliivibrio fischeri (strain ATCC 700601 / ES114) (Vibrio fischeri).